The sequence spans 267 residues: Phosphatidylserine decarboxylase proenzyme (267 aa).

Residues Asp78, His132, and Ser236 each act as charge relay system; for autoendoproteolytic cleavage activity in the active site. Ser236 acts as the Schiff-base intermediate with substrate; via pyruvic acid; for decarboxylase activity in catalysis. Ser236 is modified (pyruvic acid (Ser); by autocatalysis).

This sequence belongs to the phosphatidylserine decarboxylase family. PSD-B subfamily. Prokaryotic type I sub-subfamily. Heterodimer of a large membrane-associated beta subunit and a small pyruvoyl-containing alpha subunit. Requires pyruvate as cofactor. In terms of processing, is synthesized initially as an inactive proenzyme. Formation of the active enzyme involves a self-maturation process in which the active site pyruvoyl group is generated from an internal serine residue via an autocatalytic post-translational modification. Two non-identical subunits are generated from the proenzyme in this reaction, and the pyruvate is formed at the N-terminus of the alpha chain, which is derived from the carboxyl end of the proenzyme. The autoendoproteolytic cleavage occurs by a canonical serine protease mechanism, in which the side chain hydroxyl group of the serine supplies its oxygen atom to form the C-terminus of the beta chain, while the remainder of the serine residue undergoes an oxidative deamination to produce ammonia and the pyruvoyl prosthetic group on the alpha chain. During this reaction, the Ser that is part of the protease active site of the proenzyme becomes the pyruvoyl prosthetic group, which constitutes an essential element of the active site of the mature decarboxylase.

It localises to the cell membrane. It carries out the reaction a 1,2-diacyl-sn-glycero-3-phospho-L-serine + H(+) = a 1,2-diacyl-sn-glycero-3-phosphoethanolamine + CO2. The protein operates within phospholipid metabolism; phosphatidylethanolamine biosynthesis; phosphatidylethanolamine from CDP-diacylglycerol: step 2/2. In terms of biological role, catalyzes the formation of phosphatidylethanolamine (PtdEtn) from phosphatidylserine (PtdSer). This is Phosphatidylserine decarboxylase proenzyme from Helicobacter pylori (strain J99 / ATCC 700824) (Campylobacter pylori J99).